The following is a 351-amino-acid chain: Phosphoribosylformylglycinamidine cyclo-ligase (351 aa).

It belongs to the AIR synthase family.

Its subcellular location is the cytoplasm. It carries out the reaction 2-formamido-N(1)-(5-O-phospho-beta-D-ribosyl)acetamidine + ATP = 5-amino-1-(5-phospho-beta-D-ribosyl)imidazole + ADP + phosphate + H(+). It functions in the pathway purine metabolism; IMP biosynthesis via de novo pathway; 5-amino-1-(5-phospho-D-ribosyl)imidazole from N(2)-formyl-N(1)-(5-phospho-D-ribosyl)glycinamide: step 2/2. The protein is Phosphoribosylformylglycinamidine cyclo-ligase of Burkholderia cenocepacia (strain HI2424).